The following is a 126-amino-acid chain: Holo-[acyl-carrier-protein] synthase (126 aa).

Mg(2+)-binding residues include aspartate 9 and glutamate 58.

The protein belongs to the P-Pant transferase superfamily. AcpS family. Requires Mg(2+) as cofactor.

It localises to the cytoplasm. It catalyses the reaction apo-[ACP] + CoA = holo-[ACP] + adenosine 3',5'-bisphosphate + H(+). Functionally, transfers the 4'-phosphopantetheine moiety from coenzyme A to a Ser of acyl-carrier-protein. This is Holo-[acyl-carrier-protein] synthase from Enterobacter sp. (strain 638).